A 227-amino-acid chain; its full sequence is ATP synthase F(0) complex subunit a (227 aa).

The next 6 membrane-spanning stretches (helical) occupy residues 12 to 32 (PCLL…LLLP), 69 to 89 (WALL…LGLL), 98 to 118 (QLSM…LTGL), 139 to 159 (IPAL…ALGV), 170 to 190 (LLIQ…PSIS), and 196 to 216 (ILFL…YVFV).

The protein belongs to the ATPase A chain family. Component of the ATP synthase complex composed at least of ATP5F1A/subunit alpha, ATP5F1B/subunit beta, ATP5MC1/subunit c (homooctomer), MT-ATP6/subunit a, MT-ATP8/subunit 8, ATP5ME/subunit e, ATP5MF/subunit f, ATP5MG/subunit g, ATP5MK/subunit k, ATP5MJ/subunit j, ATP5F1C/subunit gamma, ATP5F1D/subunit delta, ATP5F1E/subunit epsilon, ATP5PF/subunit F6, ATP5PB/subunit b, ATP5PD/subunit d, ATP5PO/subunit OSCP. ATP synthase complex consists of a soluble F(1) head domain (subunits alpha(3) and beta(3)) - the catalytic core - and a membrane F(0) domain - the membrane proton channel (subunits c, a, 8, e, f, g, k and j). These two domains are linked by a central stalk (subunits gamma, delta, and epsilon) rotating inside the F1 region and a stationary peripheral stalk (subunits F6, b, d, and OSCP). Interacts with DNAJC30; interaction is direct.

It is found in the mitochondrion inner membrane. The enzyme catalyses H(+)(in) = H(+)(out). Functionally, subunit a, of the mitochondrial membrane ATP synthase complex (F(1)F(0) ATP synthase or Complex V) that produces ATP from ADP in the presence of a proton gradient across the membrane which is generated by electron transport complexes of the respiratory chain. ATP synthase complex consist of a soluble F(1) head domain - the catalytic core - and a membrane F(1) domain - the membrane proton channel. These two domains are linked by a central stalk rotating inside the F(1) region and a stationary peripheral stalk. During catalysis, ATP synthesis in the catalytic domain of F(1) is coupled via a rotary mechanism of the central stalk subunits to proton translocation. With the subunit c (ATP5MC1), forms the proton-conducting channel in the F(0) domain, that contains two crucial half-channels (inlet and outlet) that facilitate proton movement from the mitochondrial intermembrane space (IMS) into the matrix. Protons are taken up via the inlet half-channel and released through the outlet half-channel, following a Grotthuss mechanism. In Gallus gallus (Chicken), this protein is ATP synthase F(0) complex subunit a.